Consider the following 430-residue polypeptide: Asparagine--tRNA ligase (430 aa).

Belongs to the class-II aminoacyl-tRNA synthetase family. Homodimer.

It is found in the cytoplasm. It catalyses the reaction tRNA(Asn) + L-asparagine + ATP = L-asparaginyl-tRNA(Asn) + AMP + diphosphate + H(+). This Staphylococcus epidermidis (strain ATCC 35984 / DSM 28319 / BCRC 17069 / CCUG 31568 / BM 3577 / RP62A) protein is Asparagine--tRNA ligase.